Here is a 141-residue protein sequence, read N- to C-terminus: Large ribosomal subunit protein uL11 (141 aa).

This sequence belongs to the universal ribosomal protein uL11 family. Part of the ribosomal stalk of the 50S ribosomal subunit. Interacts with L10 and the large rRNA to form the base of the stalk. L10 forms an elongated spine to which L12 dimers bind in a sequential fashion forming a multimeric L10(L12)X complex. One or more lysine residues are methylated.

In terms of biological role, forms part of the ribosomal stalk which helps the ribosome interact with GTP-bound translation factors. The chain is Large ribosomal subunit protein uL11 from Chlorobium phaeobacteroides (strain BS1).